A 467-amino-acid polypeptide reads, in one-letter code: Asparagine--tRNA ligase (467 aa).

This sequence belongs to the class-II aminoacyl-tRNA synthetase family. Homodimer.

It is found in the cytoplasm. The enzyme catalyses tRNA(Asn) + L-asparagine + ATP = L-asparaginyl-tRNA(Asn) + AMP + diphosphate + H(+). The chain is Asparagine--tRNA ligase from Actinobacillus pleuropneumoniae serotype 5b (strain L20).